A 141-amino-acid chain; its full sequence is uncharacterized protein (141 aa).

This is an uncharacterized protein from Saccharomyces cerevisiae (strain ATCC 204508 / S288c) (Baker's yeast).